Reading from the N-terminus, the 858-residue chain is Protein lines (858 aa).

The segment at 1–102 (MDTSSAAGSG…NSPTTTPCSS (102 aa)) is disordered. Composition is skewed to low complexity over residues 20 to 30 (STVATSTTSAS) and 65 to 102 (LDANSNSHLCSSLSSSSSHSLSTPSTANNSPTTTPCSS).

It belongs to the protein lines family. Interacts with drm. As to expression, expressed throughout the embryo, including the hindgut, posterior midgut and embryonic epidermis.

The protein localises to the cytoplasm. The protein resides in the nucleus. Its function is as follows. Has a dual role as a segment polarity protein and as a modulator of the Abd-B protein. Required for Abd-B to activate the transcription of genes (including ems, cut and sal) that are involved in posterior spiracle morphogenesis. Also required for Abd-B to form an eighth abdominal denticle belt. Acts in a hierarchy downstream of drm and upstream of bowl during foregut and hindgut patterning and morphogenesis. Involved in cell rearrangement during elongation of the embryonic hindgut. Required to regulate expression of embryonic hindgut patterning genes in order to establish the large intestine and at least some rectum, and to repress small intestine fate. Required for late wingless (wg)-dependent cell fate specification in the dorsal embryonic epidermis. Acts in concert with wg to regulate expression of wg itself and also to regulate wg-target genes. May have a role in ventral epidermal patterning, independent of wg signaling. The polypeptide is Protein lines (Drosophila melanogaster (Fruit fly)).